The primary structure comprises 186 residues: ATP-dependent protease subunit HslV (186 aa).

The active site involves Thr-14. Positions 168, 171, and 174 each coordinate Na(+).

This sequence belongs to the peptidase T1B family. HslV subfamily. In terms of assembly, a double ring-shaped homohexamer of HslV is capped on each side by a ring-shaped HslU homohexamer. The assembly of the HslU/HslV complex is dependent on binding of ATP.

It is found in the cytoplasm. It catalyses the reaction ATP-dependent cleavage of peptide bonds with broad specificity.. Allosterically activated by HslU binding. Its function is as follows. Protease subunit of a proteasome-like degradation complex believed to be a general protein degrading machinery. The polypeptide is ATP-dependent protease subunit HslV (Bradyrhizobium sp. (strain ORS 278)).